A 213-amino-acid chain; its full sequence is MPSLLLVVFILQFLLHIINTVGASTVNDLLWILYNKLPTPTSSSAQKAQKLKKEIVQLKRELGATSAQDNFSKWAKLDRQHNKAMAEFQKIDGSLRGHQTAFTSAVSTLRWLGTQGLRFVLQFWFAKSPMFWMPAGWLPFYVEWILSFPRAPLGSVSINVWGIACASMIALAAEGLAAVWVLATKRPTPIATEKKEAMAFAADQKSSGEKKEL.

Over 1 to 4 (MPSL) the chain is Lumenal. A helical membrane pass occupies residues 5–24 (LLVVFILQFLLHIINTVGAS). Residues 25–110 (TVNDLLWILY…AFTSAVSTLR (86 aa)) are Cytoplasmic-facing. Positions 41-68 (TSSSAQKAQKLKKEIVQLKRELGATSAQ) form a coiled coil. The helical transmembrane segment at 111–131 (WLGTQGLRFVLQFWFAKSPMF) threads the bilayer. Over 132 to 155 (WMPAGWLPFYVEWILSFPRAPLGS) the chain is Lumenal. A helical membrane pass occupies residues 156–172 (VSINVWGIACASMIALA). The Cytoplasmic portion of the chain corresponds to 173–213 (AEGLAAVWVLATKRPTPIATEKKEAMAFAADQKSSGEKKEL).

This sequence belongs to the WRB/GET1 family. As to quaternary structure, interacts with GET3.

The protein localises to the endoplasmic reticulum membrane. Required for the post-translational delivery of tail-anchored (TA) proteins to the endoplasmic reticulum. Acts as a membrane receptor for soluble GET3, which recognizes and selectively binds the transmembrane domain of TA proteins in the cytosol. In Phaeosphaeria nodorum (strain SN15 / ATCC MYA-4574 / FGSC 10173) (Glume blotch fungus), this protein is Protein GET1.